We begin with the raw amino-acid sequence, 436 residues long: Gamma-glutamyl phosphate reductase (436 aa).

Belongs to the gamma-glutamyl phosphate reductase family.

It is found in the cytoplasm. The enzyme catalyses L-glutamate 5-semialdehyde + phosphate + NADP(+) = L-glutamyl 5-phosphate + NADPH + H(+). It functions in the pathway amino-acid biosynthesis; L-proline biosynthesis; L-glutamate 5-semialdehyde from L-glutamate: step 2/2. Its function is as follows. Catalyzes the NADPH-dependent reduction of L-glutamate 5-phosphate into L-glutamate 5-semialdehyde and phosphate. The product spontaneously undergoes cyclization to form 1-pyrroline-5-carboxylate. In Prochlorococcus marinus (strain MIT 9515), this protein is Gamma-glutamyl phosphate reductase.